The primary structure comprises 223 residues: Small ribosomal subunit protein uS3 (223 aa).

The 69-residue stretch at 39–107 (VRSYLAKKLS…PVHINIQEIR (69 aa)) folds into the KH type-2 domain.

This sequence belongs to the universal ribosomal protein uS3 family. Part of the 30S ribosomal subunit. Forms a tight complex with proteins S10 and S14.

Binds the lower part of the 30S subunit head. Binds mRNA in the 70S ribosome, positioning it for translation. This chain is Small ribosomal subunit protein uS3, found in Nitrosococcus oceani (strain ATCC 19707 / BCRC 17464 / JCM 30415 / NCIMB 11848 / C-107).